The following is a 275-amino-acid chain: Probable siderophore transport system ATP-binding protein YusV (275 aa).

An ABC transporter domain is found at 6 to 242 (ISTETLSLGY…DLVQNVFSMN (237 aa)). Position 38-45 (38-45 (GSNGCGKS)) interacts with ATP.

It belongs to the ABC transporter superfamily. In terms of assembly, the iron-hydroxamate siderophore complex is composed of one ATP-binding protein (YusV), two transmembrane proteins (YfiZ and YfhA) and a solute-binding protein (YfiY); the catechoplate siderophore complex is composed of one ATP-binding protein (YusV), two transmembrane proteins (FeuB and FeuC) and a solute-binding protein (FeuA).

The protein resides in the cell membrane. Provides the ATPase subunit for at least 2 ABC transporter complexes; YfiYZ/YfhA/YusV involved in import of the iron-hydroxamate siderophores schizokinen, arthrobactin and corprogen, and FeuABC/YusV involved in import of the catecholate siderophores bacillibactin and enterobactin. Probably responsible for energy coupling to the transport system. The polypeptide is Probable siderophore transport system ATP-binding protein YusV (yusV) (Bacillus subtilis (strain 168)).